Reading from the N-terminus, the 398-residue chain is Palmitoyl-[acyl-carrier-protein] 4-desaturase 3, chloroplastic (398 aa).

Residues 1–29 (MALRSLFLPNAFPNASSFRGGSRRGAAPR) constitute a chloroplast transit peptide. E139, E177, H180, E230, E263, and H266 together coordinate Fe cation.

Belongs to the fatty acid desaturase type 2 family. Homodimer. Fe(2+) is required as a cofactor. As to expression, preferentially expressed in the flower labellum. Low expression in leaves.

The protein localises to the plastid. Its subcellular location is the chloroplast stroma. The enzyme catalyses hexadecanoyl-[ACP] + 2 reduced [2Fe-2S]-[ferredoxin] + O2 + 2 H(+) = (4Z)-hexadecenoyl-[ACP] + 2 oxidized [2Fe-2S]-[ferredoxin] + 2 H2O. The protein operates within lipid metabolism; fatty acid metabolism. In terms of biological role, converts palmitoyl-ACP to (4Z)-hexadec-4-enoyl-ACP by introduction of a cis double bond between carbons 4 and 5 of the acyl chain. The sequence is that of Palmitoyl-[acyl-carrier-protein] 4-desaturase 3, chloroplastic (SAD3) from Ophrys arachnitiformis subsp. archipelagi (Orchid).